The primary structure comprises 954 residues: Mycolic acid-containing lipids exporter MmpL11 (954 aa).

Transmembrane regions (helical) follow at residues 11-31, 188-208, 214-234, 235-255, 279-299, 312-334, 373-393, 529-549, 559-579, 597-617, 648-668, and 670-690; these read FRWA…YLAL, IVLI…LPLV, VVVT…SVFV, TSTV…FILM, GLAV…IYLI, ILAV…ATFG, AIAA…MVLG, TQPL…LVSI, VLMT…VFQW, IPPL…IFLL, AALI…PLVA, and LGVA…LVLV.

The protein resides in the cell inner membrane. Contributes to cell wall biosynthesis and biofilm formation. Transports the mycolic acid-containing lipids monomeromycolyl diacylglycerol (MMDAG) and mycolate ester wax (WE) to the bacterial surface. In Mycolicibacterium smegmatis (strain ATCC 700084 / mc(2)155) (Mycobacterium smegmatis), this protein is Mycolic acid-containing lipids exporter MmpL11.